A 270-amino-acid polypeptide reads, in one-letter code: ATP synthase subunit a (270 aa).

The next 5 helical transmembrane spans lie at 37 to 57 (NVHI…LGVF), 98 to 118 (IAPL…MDLV), 143 to 163 (DVNI…YYSI), 208 to 228 (LFGN…MLPW), and 239 to 259 (AIFH…LTIV).

This sequence belongs to the ATPase A chain family. F-type ATPases have 2 components, CF(1) - the catalytic core - and CF(0) - the membrane proton channel. CF(1) has five subunits: alpha(3), beta(3), gamma(1), delta(1), epsilon(1). CF(0) has three main subunits: a(1), b(2) and c(9-12). The alpha and beta chains form an alternating ring which encloses part of the gamma chain. CF(1) is attached to CF(0) by a central stalk formed by the gamma and epsilon chains, while a peripheral stalk is formed by the delta and b chains.

The protein resides in the cell inner membrane. Its function is as follows. Key component of the proton channel; it plays a direct role in the translocation of protons across the membrane. This Vibrio cholerae serotype O1 (strain ATCC 39315 / El Tor Inaba N16961) protein is ATP synthase subunit a.